A 2122-amino-acid polypeptide reads, in one-letter code: MASQVLQLLRQGVWAALTGGWYHDPEHSKFTNSCHLYLWLFLLLLPLALHLAFPPNVLTALFYCGSVTIFFAVIKLISYRLHLMFDKGEAIQHRSPRKRSKRKPEGEASSQHTARHKNPSNNRQIHSTKKEEPRGSLTTPPLCCSSRGQSVHSQHSSGPLELPAQETVEDLKGVVLSEDQPEALASSTSPGMKSESLPASQGRTPEPTPRPACPLKPVTTELFTARKGKESGGTAQRPARHRSESGLVNPGALKKLPQLSLSQYDLLETDISFQPWGSEHSVLLPQPNCTQGATRAQPQNRSPQDSLSSSCCQCNTVLAKPTEEELTRTSGQVELPLNQEVVDSDGEVAVTLIDTSQPGEPLSLHEPIKIVITMSSTQNSISDLESSLHLRVTSSDRTSVRSSAESAGSGGAGPADPEQVRIPLITLELTEDGGGRGVSCSEGNGGERTPERMEVMSPDRCSGSGPGDGSPTPGSTLATLTPRVDPESEGSKEGQANLDPASCKSSHEKRHARVLSVDSGTDVFLSRSTKEVVSDGEKPIPTSKSDLEAKEGQIPNESNFLEFVSLLESISTSKVVAPDSPAEQKGASQGPEGHASPGTKEEAVENEKPNGRDPKPGKPDLPSQDPANGSPVFTQPAKSAALFQGSRQRHIIYRVTSQQDSSVLQVISGPETSVQEEMSLDAMHVFIDEHGEVRSCYLKSGNQKEGSSQHPPLNPDCVSHARGILLSSSSSTATGSPDPSSGDPAVSALQQQLLLMVARRTQSETPRHVSQDLEDSSRSSAQGKFNREQFYKFIVFPGKWIKVWYDRLTLLALLDRTEDVKENMVAVLLSVLVSLLGFLTLNRGFCRDLWVLLFCLVMASCQYSLLKSVQPDPASPIHGHNQIIAYSRPIYFCMLCSLILLLDAGAKAKHPPSYVVYGLKLFTPETLQAVRDHLIVFLCCFPAISLLGLFPQINTFCTYLLEQIDMLLFGGSAVSGITSAVYSVGRSVLAAALLHAFCFSAVKEPWSTQHIPALFSAFCGLLVALSYHLSRQSSDPSVLLSFIQCKLLPKCLHQNLEESATDPLPQRMKDSVKDVLRSDLVICSAAAVLSFAVSASTVFLSLRPFLSIVLFALAGTVGLITHHLLPQLRKHHPWMWISHPVLRSKEYQQREARDIAHLMWFERLYVWLQCFEKYLLYPAIVLNALTLDAFSISNYRRLGTHWDIFLMITAGMKLLRTSFCNPVHQFANLGFTVIFFHFDYKDISESFLLDFFMVSIVFTKLGDLLQKLQFVLAYVAPWQMAWGSSFHVFAQLFAIPHSAMLFFQTFATSIFSTPLSPFLGSVIFITSYVRPVKFWERSYNTRRMDNSNTRLAVQMERDPGSDDNNLNSIFYEHLTRTLQESLCGDLVLGRWGNYSSGDCFILASDDLNAFVHLIEIGNGLVTFQLRGLEFRGTYCQQREVEAIMEGDEDDRGCCCCKPGHLPHLLSCNAAFHLRWLTWEITRTQYILEGYSIIDNNAATMLQVYDLRRVLIRYYVKSIIYYMVTSPKLVSWVKNESLLKSLQPFAKWHHIERDLAMFNINIDDDYVPCLQGITRASYCNVFLEWIQYCAGKRQELSKTLEHVDSDEDSALVTLAFALCILGRRALGTAAHNMAMSLDSFLYGLHALFKGDFRVTARDEWVFADMDLLHKVVVPAIRMSLKLHQDQFTCPDEYEDPAVLYEAIRSFAKKVVICHEGDPAWRGAMLSNKEELLTLRHVVDEGADEYKVIMLHRGFLSFKVIKVNKECVRGLWAGQQQELIFLRNRNPERGSIQNNKQVLRNLINSSCDQPLGYPMYVSPLTTSYLGTHKQLQSVWGGPVTLNRVRTWFQTRWLRMRKDCSVGQRSGGGNIEDGEGGAVPSAGGGSAPNGESRDGSTEQPRKGGTQQWSSPRGEAQRAGRRKGRSQSVQAHSAISQRPPTLSSSGPILESHQAFLQTSTSVHELAQRPSGSRLSLHTSAASLHSQPPPVTTTGHLSVRERAEALIRSSLGSSTSSTLSFLFGKRSFSSALVISGLSAAEGGNTSDTQSSSSVNIVMGPSARAAGHAARHFSEPCEPTDSPEQGQLQDGRLAEAMEENLGVLCRRASQEDMGLDDTASQQSTSDEQ.

Helical transmembrane passes span 36–53 (LYLW…HLAF) and 60–82 (ALFY…YRLH). Disordered regions lie at residues 92 to 164 (QHRS…ELPA) and 180 to 250 (QPEA…LVNP). Composition is skewed to polar residues over residues 146-157 (SRGQSVHSQHSS) and 185-203 (ASST…SQGR). N-linked (GlcNAc...) asparagine glycosylation occurs at Asn-288. 2 stretches are compositionally biased toward low complexity: residues 392–407 (VTSS…AESA) and 458–476 (PDRC…PGST). Disordered stretches follow at residues 392–556 (VTSS…QIPN) and 575–634 (VVAP…PVFT). Positions 528–538 (STKEVVSDGEK) are enriched in basic and acidic residues. Asn-556 carries an N-linked (GlcNAc...) asparagine glycan. Residues 599–618 (TKEEAVENEKPNGRDPKPGK) show a composition bias toward basic and acidic residues. Residues 625-634 (DPANGSPVFT) show a composition bias toward polar residues. 13 helical membrane-spanning segments follow: residues 825–845 (VAVL…NRGF), 849–869 (LWVL…LKSV), 882–902 (QIIA…ILLL), 933–953 (HLIV…FPQI), 976–998 (GITS…HAFC), 1010–1030 (HIPA…YHLS), 1080–1100 (LVIC…TVFL), 1105–1125 (FLSI…HHLL), 1174–1194 (YLLY…SISN), 1218–1238 (SFCN…FFHF), 1245–1265 (ESFL…GDLL), 1270–1290 (FVLA…HVFA), and 1305–1325 (TFAT…VIFI). 3 N-linked (GlcNAc...) asparagine glycosylation sites follow: Asn-1393, Asn-1534, and Asn-1802. Disordered stretches follow at residues 1858–1943 (SVGQ…SSGP) and 1955–1991 (STSV…TTGH). The segment covering 1888 to 1898 (ESRDGSTEQPR) has biased composition (basic and acidic residues). A compositionally biased stretch (polar residues) spans 1922–1942 (SQSVQAHSAISQRPPTLSSSG). Over residues 1968–1981 (SRLSLHTSAASLHS) the composition is skewed to low complexity. Residue Asn-2039 is glycosylated (N-linked (GlcNAc...) asparagine). A disordered region spans residues 2097–2122 (VLCRRASQEDMGLDDTASQQSTSDEQ). Polar residues predominate over residues 2112-2122 (TASQQSTSDEQ).

It belongs to the pecanex family.

It is found in the membrane. Its function is as follows. May play a role in tumorigenesis. The chain is Pecanex-like protein 2 from Mus musculus (Mouse).